The chain runs to 65 residues: Weak neurotoxin 6 (65 aa).

Disulfide bonds link C3–C24, C6–C11, C17–C42, C46–C57, and C58–C63.

This sequence belongs to the three-finger toxin family. Ancestral subfamily. Orphan group II sub-subfamily. Expressed by the venom gland.

The protein localises to the secreted. In terms of biological role, binds with low affinity to muscular (alpha-1-beta-1-delta-epsilon/CHRNA1-CHRNB1-CHRND-CHRNE) and very low affinity to neuronal (alpha-7/CHRNA7) nicotinic acetylcholine receptor (nAChR). This is Weak neurotoxin 6 from Naja naja (Indian cobra).